We begin with the raw amino-acid sequence, 440 residues long: UDP-N-acetylmuramoylalanine--D-glutamate ligase (440 aa).

ATP is bound at residue 115–121; the sequence is GSNGKST.

Belongs to the MurCDEF family.

Its subcellular location is the cytoplasm. The catalysed reaction is UDP-N-acetyl-alpha-D-muramoyl-L-alanine + D-glutamate + ATP = UDP-N-acetyl-alpha-D-muramoyl-L-alanyl-D-glutamate + ADP + phosphate + H(+). It participates in cell wall biogenesis; peptidoglycan biosynthesis. In terms of biological role, cell wall formation. Catalyzes the addition of glutamate to the nucleotide precursor UDP-N-acetylmuramoyl-L-alanine (UMA). The chain is UDP-N-acetylmuramoylalanine--D-glutamate ligase from Aliivibrio fischeri (strain ATCC 700601 / ES114) (Vibrio fischeri).